The following is a 217-amino-acid chain: GrpE protein homolog 1, mitochondrial (217 aa).

A mitochondrion-targeting transit peptide spans 1–27 (MAARCVRLARRSLPALALSFRPSPRLL). A disordered region spans residues 37–56 (GQNLDEDLGHCEPKTDPPSA). Lysine 94 is modified (N6-acetyllysine; alternate). Lysine 94 carries the N6-succinyllysine; alternate modification. Position 100 is an N6-acetyllysine (lysine 100). Lysine 120 is subject to N6-succinyllysine. Lysine 215 carries the post-translational modification N6-acetyllysine; alternate. Lysine 215 is modified (N6-succinyllysine; alternate).

It belongs to the GrpE family. As to quaternary structure, probable component of the PAM complex at least composed of a mitochondrial HSP70 protein, GRPEL1 or GRPEL2, TIMM44, TIMM16/PAM16 and TIMM14/DNAJC19. Binds to HSP70, HSC70 and HSJ1B.

The protein resides in the mitochondrion matrix. Functionally, essential component of the PAM complex, a complex required for the translocation of transit peptide-containing proteins from the inner membrane into the mitochondrial matrix in an ATP-dependent manner. Seems to control the nucleotide-dependent binding of mitochondrial HSP70 to substrate proteins. This Mus musculus (Mouse) protein is GrpE protein homolog 1, mitochondrial (Grpel1).